A 301-amino-acid chain; its full sequence is D-alanine--D-alanine ligase (301 aa).

Positions 99–293 constitute an ATP-grasp domain; that stretch reads KRILAFGNVR…FEELLDTIIE (195 aa). Position 126–181 (126–181) interacts with ATP; the sequence is IENLGYPVFIKPNNGGSSVATTLVESKEAVKDAVLEALKYDTEVMIEEYIKGDEIT. Asp-248, Glu-260, and Asn-262 together coordinate Mg(2+).

The protein belongs to the D-alanine--D-alanine ligase family. Requires Mg(2+) as cofactor. The cofactor is Mn(2+).

Its subcellular location is the cytoplasm. The catalysed reaction is 2 D-alanine + ATP = D-alanyl-D-alanine + ADP + phosphate + H(+). It participates in cell wall biogenesis; peptidoglycan biosynthesis. In terms of biological role, cell wall formation. This is D-alanine--D-alanine ligase from Clostridium perfringens (strain SM101 / Type A).